A 215-amino-acid chain; its full sequence is Sperm acrosome membrane-associated protein 3 (215 aa).

The Cytoplasmic segment spans residues M1–R63. The chain crosses the membrane as a helical; Signal-anchor for type II membrane protein span at residues W64 to S84. Residues S85 to F215 are Extracellular-facing. Residues K88–F215 form the C-type lysozyme domain. 4 disulfides stabilise this stretch: C93/C213, C117/C201, C151/C166, and C162/C180.

Belongs to the glycosyl hydrolase 22 family. In terms of assembly, interacts with ASTL. The processed form derives from the membrane form by proteolytic processing. The processed form is expressed in sperm (at protein level). Expressed in testis, epididymis and placenta.

It is found in the cytoplasmic vesicle. The protein resides in the secretory vesicle. Its subcellular location is the acrosome membrane. The protein localises to the secreted. In terms of biological role, sperm surface membrane protein that may be involved in sperm-egg plasma membrane adhesion and fusion during fertilization. It could be a potential receptor for the egg oligosaccharide residue N-acetylglucosamine, which is present in the extracellular matrix over the egg plasma membrane. The processed form has no detectable bacteriolytic activity in vitro. This Homo sapiens (Human) protein is Sperm acrosome membrane-associated protein 3 (SPACA3).